The primary structure comprises 419 residues: MKKGNVIIKNASQVITCSGFEGKFGKDMNNINVIENASVVVEDGIIKEIGSLEDILKKYNEKHFEIVDASNKAVLPGFVDSHTHFVFGGFRAEEFSWRLNGESYMDIMNKGGGIVNSVRGTREATEDELYESAKKRLDSMIHFGVTTVEGKSGYGLDYETELKQLRVMDRLQKDHSIDICKTFMGAHATPEEYRGRNEEYINFIIEDVLPKVAEEKLAEFCDVFCEEGVFSVEESRKILLKAKELGMKIKLHADEIVQLGGAELAAELGATSADHLLHASDEGIKAMADKKVIATLLPTTAFCLKEPFARARMMIDKGGAVALGTDFNPGSGFTNSIPLMFALATIYMDMSIEEAISAMTINGAAAIGRAETIGSIDKGKKGDLVILEYPSYKFLPYNTGVNIVETVIKDGNIVYKKSY.

The Fe(3+) site is built by histidine 82 and histidine 84. Zn(2+)-binding residues include histidine 82 and histidine 84. 3 residues coordinate 4-imidazolone-5-propanoate: arginine 91, tyrosine 154, and histidine 187. Tyrosine 154 serves as a coordination point for N-formimidoyl-L-glutamate. Position 252 (histidine 252) interacts with Fe(3+). Histidine 252 lines the Zn(2+) pocket. Glutamate 255 lines the 4-imidazolone-5-propanoate pocket. Position 326 (aspartate 326) interacts with Fe(3+). Aspartate 326 contributes to the Zn(2+) binding site. 2 residues coordinate N-formimidoyl-L-glutamate: asparagine 328 and glycine 330. Serine 331 lines the 4-imidazolone-5-propanoate pocket.

Belongs to the metallo-dependent hydrolases superfamily. HutI family. It depends on Zn(2+) as a cofactor. Fe(3+) is required as a cofactor.

It is found in the cytoplasm. The catalysed reaction is 4-imidazolone-5-propanoate + H2O = N-formimidoyl-L-glutamate. It participates in amino-acid degradation; L-histidine degradation into L-glutamate; N-formimidoyl-L-glutamate from L-histidine: step 3/3. Catalyzes the hydrolytic cleavage of the carbon-nitrogen bond in imidazolone-5-propanoate to yield N-formimidoyl-L-glutamate. It is the third step in the universal histidine degradation pathway. The polypeptide is Imidazolonepropionase (Clostridium tetani (strain Massachusetts / E88)).